Consider the following 612-residue polypeptide: Sulfite reductase [NADPH] hemoprotein beta-component (612 aa).

Positions Met1–Arg32 are disordered. 4 residues coordinate [4Fe-4S] cluster: Cys469, Cys475, Cys514, and Cys518. Cys518 contributes to the siroheme binding site.

The protein belongs to the nitrite and sulfite reductase 4Fe-4S domain family. As to quaternary structure, alpha(8)-beta(8). The alpha component is a flavoprotein, the beta component is a hemoprotein. Siroheme serves as cofactor. It depends on [4Fe-4S] cluster as a cofactor.

The enzyme catalyses hydrogen sulfide + 3 NADP(+) + 3 H2O = sulfite + 3 NADPH + 4 H(+). Its pathway is sulfur metabolism; hydrogen sulfide biosynthesis; hydrogen sulfide from sulfite (NADPH route): step 1/1. Its function is as follows. Component of the sulfite reductase complex that catalyzes the 6-electron reduction of sulfite to sulfide. This is one of several activities required for the biosynthesis of L-cysteine from sulfate. This Methylorubrum populi (strain ATCC BAA-705 / NCIMB 13946 / BJ001) (Methylobacterium populi) protein is Sulfite reductase [NADPH] hemoprotein beta-component.